Here is a 543-residue protein sequence, read N- to C-terminus: Chaperonin GroEL (543 aa).

ATP is bound by residues 29–32, Lys50, 86–90, Gly415, and Asp495; these read TLGP and DGTTT.

Belongs to the chaperonin (HSP60) family. Forms a cylinder of 14 subunits composed of two heptameric rings stacked back-to-back. Interacts with the co-chaperonin GroES.

Its subcellular location is the cytoplasm. The enzyme catalyses ATP + H2O + a folded polypeptide = ADP + phosphate + an unfolded polypeptide.. Functionally, together with its co-chaperonin GroES, plays an essential role in assisting protein folding. The GroEL-GroES system forms a nano-cage that allows encapsulation of the non-native substrate proteins and provides a physical environment optimized to promote and accelerate protein folding. In Karelsulcia muelleri (strain GWSS) (Sulcia muelleri), this protein is Chaperonin GroEL.